Consider the following 437-residue polypeptide: Amino-acid acetyltransferase (437 aa).

Residues Glu-289–Asn-437 enclose the N-acetyltransferase domain.

The protein belongs to the acetyltransferase family. ArgA subfamily.

The protein resides in the cytoplasm. The enzyme catalyses L-glutamate + acetyl-CoA = N-acetyl-L-glutamate + CoA + H(+). It participates in amino-acid biosynthesis; L-arginine biosynthesis; N(2)-acetyl-L-ornithine from L-glutamate: step 1/4. This chain is Amino-acid acetyltransferase, found in Haemophilus ducreyi (strain 35000HP / ATCC 700724).